The chain runs to 600 residues: MAPSSKSERNSGAGSAGGGPGGTGGKRAVGRRREHVLKQLERVKISGQLSPRLFRKLPPRVCVSLKNIVDEDFLYAGHIFLGFSKCGRYVLSYTSSSGDDDFSFYIYHLYWWEFNVHSKLKLVRQVRLFQDEEIYSDLYLTVCEWPSDASKVIVFGFNTRSANGMLMNMMMMSDENHRDIYISTVAVPPRGRCAACQDASRAHPGDPSAQCLRHGFMLHTKYQVVYPFPTFQPAFQLKKDQVVLLNTSYSLVACAVSVHSAGDSSFCQILYDHTALPPAPPSSPGPWSPEAAPAFPSLGVEVVPAQPSGAPEPSPAIAKAKEFVADIFRRAKEAKGSPLEETRLPSSLGPSSSRCRPSLEPQAPSGEVVPRDSPPAAETTAPEPGYINYTKLHYVLQSGEGTEPEDEFEDDKISLPFVVTDLRGRNLRPMRERTDMQGQYLTVEQLTLDFEYVINEVIRHDATWGHQFCSFSDYDIVILEVCPETNQVLINIGLLLLAFPAPTEEGQLRPKTYHTSLKVAWDLNTGIFETVSVGDLTEVKGQTSGSVWSSYRKSCVDMVMKWLVPESSGRYVNRMTNEALHKGCSLKVLADSERYTWIVL.

The disordered stretch occupies residues 1 to 29; the sequence is MAPSSKSERNSGAGSAGGGPGGTGGKRAV. The segment covering 14-27 has biased composition (gly residues); sequence GSAGGGPGGTGGKR. At Ser50 the chain carries Phosphoserine. The Zn(2+) site is built by Cys193, Cys196, Cys211, and His214. Position 314 is a phosphoserine (Ser314). The segment covering 334–343 has biased composition (basic and acidic residues); that stretch reads AKGSPLEETR. The segment at 334 to 384 is disordered; sequence AKGSPLEETRLPSSLGPSSSRCRPSLEPQAPSGEVVPRDSPPAAETTAPEP. Low complexity-rich tracts occupy residues 344–359 and 374–384; these read LPSS…RPSL and PPAAETTAPEP.

As to quaternary structure, component of the DCX(DCAF15) complex, also named CLR4(DCAF15) complex, composed of DCAF15, DDB1, cullin-4 (CUL4A or CUL4B), DDA1 and RBX1.

It participates in protein modification; protein ubiquitination. Functionally, substrate-recognition component of the DCX(DCAF15) complex, a cullin-4-RING E3 ubiquitin-protein ligase complex that mediates ubiquitination and degradation of target proteins. The DCX(DCAF15) complex acts as a regulator of the natural killer (NK) cells effector functions, possibly by mediating ubiquitination and degradation of cohesin subunits SMC1A and SMC3. May play a role in the activation of antigen-presenting cells (APC) and their interaction with NK cells. This is DDB1- and CUL4-associated factor 15 from Mus musculus (Mouse).